A 29-amino-acid chain; its full sequence is Protein YldA (29 aa).

A helical transmembrane segment spans residues 5–25 (FYILIGFLIMAAIIVMAVLYL).

It localises to the cell inner membrane. In Escherichia coli (strain K12), this protein is Protein YldA.